We begin with the raw amino-acid sequence, 79 residues long: MAQQRRGGFKRRKKVDYIAANKIEYVDYKDTELLSRFVSERGKILPRRVTGTSAKNQRKVTTAIKRARVMALMPFVNED.

Belongs to the bacterial ribosomal protein bS18 family. As to quaternary structure, part of the 30S ribosomal subunit. Forms a tight heterodimer with protein bS6.

Binds as a heterodimer with protein bS6 to the central domain of the 16S rRNA, where it helps stabilize the platform of the 30S subunit. This is Small ribosomal subunit protein bS18 from Streptococcus pneumoniae (strain Hungary19A-6).